The following is a 215-amino-acid chain: NADH-quinone oxidoreductase subunit C (215 aa).

It belongs to the complex I 30 kDa subunit family. As to quaternary structure, NDH-1 is composed of 14 different subunits. Subunits NuoB, C, D, E, F, and G constitute the peripheral sector of the complex.

It is found in the cell inner membrane. The catalysed reaction is a quinone + NADH + 5 H(+)(in) = a quinol + NAD(+) + 4 H(+)(out). In terms of biological role, NDH-1 shuttles electrons from NADH, via FMN and iron-sulfur (Fe-S) centers, to quinones in the respiratory chain. The immediate electron acceptor for the enzyme in this species is believed to be ubiquinone. Couples the redox reaction to proton translocation (for every two electrons transferred, four hydrogen ions are translocated across the cytoplasmic membrane), and thus conserves the redox energy in a proton gradient. This Dinoroseobacter shibae (strain DSM 16493 / NCIMB 14021 / DFL 12) protein is NADH-quinone oxidoreductase subunit C.